A 357-amino-acid chain; its full sequence is Neuronal-specific septin-3 (357 aa).

Residues 1-10 (MSKGLPETRT) are compositionally biased toward basic and acidic residues. The segment at 1–29 (MSKGLPETRTDAAMSELVPEPRPKPAVPM) is disordered. The Septin-type G domain occupies 58 to 330 (TGFDFNIMVV…ETYRAKRLND (273 aa)). A G1 motif region spans residues 68–75 (GQSGLGKS). Residue 68 to 75 (GQSGLGKS) participates in GTP binding. Ser-91 carries the phosphoserine modification. GTP is bound at residue Thr-102. A G3 motif region spans residues 125 to 128 (DTPG). The tract at residues 207-210 (AKAD) is G4 motif. Residues 208–216 (KADTMTLEE), Gly-264, and Arg-279 each bind GTP.

It belongs to the TRAFAC class TrmE-Era-EngA-EngB-Septin-like GTPase superfamily. Septin GTPase family. As to quaternary structure, septins polymerize into heterooligomeric protein complexes that form filaments, and can associate with cellular membranes, actin filaments and microtubules. GTPase activity is required for filament formation. Phosphorylated by PKG on serine residues. Phosphorylated by PKG on Ser-91.

Its subcellular location is the cytoplasm. The protein localises to the cytoskeleton. The protein resides in the synapse. Filament-forming cytoskeletal GTPase. May play a role in cytokinesis (Potential). The protein is Neuronal-specific septin-3 of Bos taurus (Bovine).